The following is a 186-amino-acid chain: Ribosome-recycling factor (186 aa).

The protein belongs to the RRF family.

The protein localises to the cytoplasm. In terms of biological role, responsible for the release of ribosomes from messenger RNA at the termination of protein biosynthesis. May increase the efficiency of translation by recycling ribosomes from one round of translation to another. This chain is Ribosome-recycling factor, found in Rickettsia typhi (strain ATCC VR-144 / Wilmington).